The following is a 430-amino-acid chain: 3-phosphoshikimate 1-carboxyvinyltransferase (430 aa).

Positions 23, 24, and 28 each coordinate 3-phosphoshikimate. Lys-23 serves as a coordination point for phosphoenolpyruvate. Phosphoenolpyruvate contacts are provided by Gly-93 and Arg-121. 3-phosphoshikimate contacts are provided by Ser-166, Gln-168, Asp-313, and Lys-340. Gln-168 serves as a coordination point for phosphoenolpyruvate. The active-site Proton acceptor is Asp-313. Arg-344 and Arg-386 together coordinate phosphoenolpyruvate.

Belongs to the EPSP synthase family. Monomer.

The protein localises to the cytoplasm. It catalyses the reaction 3-phosphoshikimate + phosphoenolpyruvate = 5-O-(1-carboxyvinyl)-3-phosphoshikimate + phosphate. It participates in metabolic intermediate biosynthesis; chorismate biosynthesis; chorismate from D-erythrose 4-phosphate and phosphoenolpyruvate: step 6/7. Catalyzes the transfer of the enolpyruvyl moiety of phosphoenolpyruvate (PEP) to the 5-hydroxyl of shikimate-3-phosphate (S3P) to produce enolpyruvyl shikimate-3-phosphate and inorganic phosphate. This is 3-phosphoshikimate 1-carboxyvinyltransferase from Anaeromyxobacter sp. (strain Fw109-5).